The chain runs to 215 residues: Large ribosomal subunit protein uL4c (215 aa).

Polar residues predominate over residues 48–57 (SQRQGTISTK). The segment at 48 to 85 (SQRQGTISTKTRSEVRGGGRKPWRQKGTGRARAGSSRS) is disordered. The segment covering 65 to 76 (GGRKPWRQKGTG) has biased composition (basic residues).

The protein belongs to the universal ribosomal protein uL4 family. Part of the 50S ribosomal subunit.

The protein localises to the plastid. Its subcellular location is the chloroplast. In terms of biological role, probably binds the 23S rRNA. In Trieres chinensis (Marine centric diatom), this protein is Large ribosomal subunit protein uL4c (rpl4).